We begin with the raw amino-acid sequence, 98 residues long: Co-chaperonin GroES 3 (98 aa).

This sequence belongs to the GroES chaperonin family. As to quaternary structure, heptamer of 7 subunits arranged in a ring. Interacts with the chaperonin GroEL.

The protein resides in the cytoplasm. Together with the chaperonin GroEL, plays an essential role in assisting protein folding. The GroEL-GroES system forms a nano-cage that allows encapsulation of the non-native substrate proteins and provides a physical environment optimized to promote and accelerate protein folding. GroES binds to the apical surface of the GroEL ring, thereby capping the opening of the GroEL channel. The sequence is that of Co-chaperonin GroES 3 from Mesorhizobium japonicum (strain LMG 29417 / CECT 9101 / MAFF 303099) (Mesorhizobium loti (strain MAFF 303099)).